A 73-amino-acid chain; its full sequence is uncharacterized protein (73 aa).

Residues 20–49 (NATYNKNLELEKRLAKIRNEIPNKSKLIAT) are a coiled coil.

This is an uncharacterized protein from Acheta domesticus (House cricket).